The primary structure comprises 250 residues: Ribonuclease PH (250 aa).

Phosphate-binding positions include arginine 86 and 124–126 (GTR).

This sequence belongs to the RNase PH family. In terms of assembly, homohexameric ring arranged as a trimer of dimers.

It catalyses the reaction tRNA(n+1) + phosphate = tRNA(n) + a ribonucleoside 5'-diphosphate. Functionally, phosphorolytic 3'-5' exoribonuclease that plays an important role in tRNA 3'-end maturation. Removes nucleotide residues following the 3'-CCA terminus of tRNAs; can also add nucleotides to the ends of RNA molecules by using nucleoside diphosphates as substrates, but this may not be physiologically important. Probably plays a role in initiation of 16S rRNA degradation (leading to ribosome degradation) during starvation. In Shouchella clausii (strain KSM-K16) (Alkalihalobacillus clausii), this protein is Ribonuclease PH.